Reading from the N-terminus, the 419-residue chain is Acyl-[acyl-carrier-protein] hydrolase FATB1, chloroplastic (419 aa).

The transit peptide at 1–50 (MVAAAATSAFFPVPAPGTSPKPGKSGNWPSSLSPTFKPKSIPNGGFQVKA) directs the protein to the chloroplast. Positions 1–84 (MVAAAATSAF…DTSSSPPPRA (84 aa)) are disordered. A compositionally biased stretch (polar residues) spans 61-78 (SAVNLKSGSLNTQEDTSS). Active-site residues include Asn315, His317, and Cys352. Positions 390-419 (SRTEWRPKNAGTNGAISTSTAKTSNGNSVS) are disordered. Over residues 399–419 (AGTNGAISTSTAKTSNGNSVS) the composition is skewed to polar residues.

Belongs to the acyl-ACP thioesterase family.

Its subcellular location is the plastid. The protein resides in the chloroplast. It catalyses the reaction octanoyl-[ACP] + H2O = octanoate + holo-[ACP] + H(+). It carries out the reaction decanoyl-[ACP] + H2O = decanoate + holo-[ACP] + H(+). Its function is as follows. Plays an essential role in chain termination during de novo fatty acid synthesis. Possesses thioesterase activity for short chain acyl-ACPs. Substrate preference is 8:0 &gt; 10:0. This chain is Acyl-[acyl-carrier-protein] hydrolase FATB1, chloroplastic, found in Cuphea viscosissima (Blue waxweed).